A 30-amino-acid chain; its full sequence is Root cyclotide 1 (30 aa).

A cross-link (cyclopeptide (Gly-Asn)) is located at residues Gly-1–Asn-30. 3 cysteine pairs are disulfide-bonded: Cys-4–Cys-21, Cys-8–Cys-23, and Cys-13–Cys-28.

In terms of processing, this is a cyclic peptide. In terms of tissue distribution, expressed in roots.

In terms of biological role, probably participates in a plant defense mechanism. The polypeptide is Root cyclotide 1 (Viola hederacea (Australian violet)).